We begin with the raw amino-acid sequence, 713 residues long: Ribosomal RNA large subunit methyltransferase K/L (713 aa).

The THUMP domain occupies L43–F154.

It belongs to the methyltransferase superfamily. RlmKL family.

The protein localises to the cytoplasm. It carries out the reaction guanosine(2445) in 23S rRNA + S-adenosyl-L-methionine = N(2)-methylguanosine(2445) in 23S rRNA + S-adenosyl-L-homocysteine + H(+). It catalyses the reaction guanosine(2069) in 23S rRNA + S-adenosyl-L-methionine = N(2)-methylguanosine(2069) in 23S rRNA + S-adenosyl-L-homocysteine + H(+). In terms of biological role, specifically methylates the guanine in position 2445 (m2G2445) and the guanine in position 2069 (m7G2069) of 23S rRNA. The sequence is that of Ribosomal RNA large subunit methyltransferase K/L from Shewanella sp. (strain MR-7).